A 182-amino-acid chain; its full sequence is Ribosome maturation factor RimM (182 aa).

In terms of domain architecture, PRC barrel spans 103–182 (EDEFYWRELF…RIEVDWDPGF (80 aa)).

It belongs to the RimM family. As to quaternary structure, binds ribosomal protein uS19.

The protein resides in the cytoplasm. An accessory protein needed during the final step in the assembly of 30S ribosomal subunit, possibly for assembly of the head region. Essential for efficient processing of 16S rRNA. May be needed both before and after RbfA during the maturation of 16S rRNA. It has affinity for free ribosomal 30S subunits but not for 70S ribosomes. The sequence is that of Ribosome maturation factor RimM from Vibrio vulnificus (strain CMCP6).